Consider the following 478-residue polypeptide: Probable glucan endo-1,3-beta-glucosidase A6 (478 aa).

The N-terminal stretch at 1-20 (MSLLAFFLFTILVFSSSCCS) is a signal peptide. Residue Glu-135 is the Proton donor of the active site. Catalysis depends on Glu-280, which acts as the Nucleophile. A disulfide bond links Cys-390 and Cys-453.

This sequence belongs to the glycosyl hydrolase 17 family. Contains two additional disulfide bonds, but it is unclear if they are between the pairs Cys-409-Cys-416 and Cys-425-Cys-471 or between the pairs Cys-409-Cys-471 and Cys-416-Cys-425. As to expression, anthers.

The enzyme catalyses Hydrolysis of (1-&gt;3)-beta-D-glucosidic linkages in (1-&gt;3)-beta-D-glucans.. Functionally, probable beta-1,3-glucanase that may be involved in the degradation of callose walls around the microspore tetrad during pollen development. May be required for pollen exine formation. The polypeptide is Probable glucan endo-1,3-beta-glucosidase A6 (Arabidopsis thaliana (Mouse-ear cress)).